The following is a 492-amino-acid chain: 2,3-bisphosphoglycerate-independent phosphoglycerate mutase (492 aa).

Mn(2+) contacts are provided by Asp11 and Ser61. Ser61 serves as the catalytic Phosphoserine intermediate. Substrate-binding positions include His118, 147–148 (RD), Arg178, Arg184, 248–251 (RNDR), and Lys320. Asp386, His390, Asp427, His428, and His445 together coordinate Mn(2+).

The protein belongs to the BPG-independent phosphoglycerate mutase family. As to quaternary structure, monomer. Mn(2+) is required as a cofactor.

It carries out the reaction (2R)-2-phosphoglycerate = (2R)-3-phosphoglycerate. It functions in the pathway carbohydrate degradation; glycolysis; pyruvate from D-glyceraldehyde 3-phosphate: step 3/5. Its function is as follows. Catalyzes the interconversion of 2-phosphoglycerate and 3-phosphoglycerate. This Campylobacter jejuni (strain RM1221) protein is 2,3-bisphosphoglycerate-independent phosphoglycerate mutase.